Consider the following 476-residue polypeptide: Cytochrome P450 monooxygenase ppzE (476 aa).

Residue C452 participates in heme binding.

Belongs to the cytochrome P450 family. Heme serves as cofactor.

The protein operates within secondary metabolite biosynthesis. In terms of biological role, cytochrome P450 monooxygenase; part of the gene cluster that mediates the biosynthesis of pyrrolopyrazines, secondary metabolites showing insecticidal activity. The role of ppzE within the pathway has still to be determined. The single multifunctional NRPS ppzA is sufficient to produce peramine via condensation of 1-pyrroline-5-carboxylate and arginine, N-methylation of the alpha-amino group of arginine and reduction of the thioester and the cyclization to form an iminium ion resulting in release from the peptide synthetase. Deprotonation of this intermediate and oxidation of the pyrroline ring would give rise to peramine. In Epichloe species that produce only peramine, the peramine synthetase gene is not localized in a gene cluster, in contrast to Metarhizium species that contain additional pyrrolopyrazine biosynthesis genes. The 2-oxoglutarate-Fe(II) type oxidoreductase ppzC hydroxylates peramine to yield the newly identified compound 8-hydroxyperamine whereas ppzD converts L-proline into trans-4-hydroxy-L-proline, a precursor of peramine biosynthesis. The polypeptide is Cytochrome P450 monooxygenase ppzE (Metarhizium majus (strain ARSEF 297)).